The chain runs to 448 residues: N-succinylarginine dihydrolase (448 aa).

Substrate is bound by residues 19–28 (AGLSSGNIAS), asparagine 110, and 137–138 (HR). Residue glutamate 174 is part of the active site. Arginine 216 lines the substrate pocket. The active site involves histidine 252. Substrate contacts are provided by aspartate 254 and asparagine 366. Cysteine 372 serves as the catalytic Nucleophile.

It belongs to the succinylarginine dihydrolase family. Homodimer.

It catalyses the reaction N(2)-succinyl-L-arginine + 2 H2O + 2 H(+) = N(2)-succinyl-L-ornithine + 2 NH4(+) + CO2. It functions in the pathway amino-acid degradation; L-arginine degradation via AST pathway; L-glutamate and succinate from L-arginine: step 2/5. Functionally, catalyzes the hydrolysis of N(2)-succinylarginine into N(2)-succinylornithine, ammonia and CO(2). The polypeptide is N-succinylarginine dihydrolase (Legionella pneumophila (strain Corby)).